The following is a 166-amino-acid chain: Lactose-binding lectin l-2 (166 aa).

The N-terminal stretch at 1-24 is a signal peptide; sequence MVSFKLPAFLCVAVLSSMALVSHG. 3 cysteine pairs are disulfide-bonded: C34/C45, C62/C160, and C136/C152. Residues 41–161 form the C-type lectin domain; it reads HKNRCYLHVA…CDLLFPSICV (121 aa).

Homodimer; disulfide-linked. Skin; contained within club cells which are a component of the epidermis in combination with epithelial cells and mucus cells (at protein level).

The protein resides in the secreted. Functionally, involved in host defense at the body surface. Causes agglutination and suppresses the growth of the Gram-negative bacterium E.coli K12. Possesses calcium-independent hemagglutinating activity. The sequence is that of Lactose-binding lectin l-2 from Anguilla japonica (Japanese eel).